The following is a 108-amino-acid chain: MVNLGLSRVDDAVAAKHPGLGEYAACQSHAFMKGVFTFVTGTGMAFGLQMFIQRKFPYPLQWSLLVAVVAGSVVSYGVTRVESEKCNNLWLFLETGQLPKDRSTDQRS.

The next 2 membrane-spanning stretches (helical) occupy residues 32–52 (MKGV…QMFI) and 58–78 (YPLQ…SYGV).

It belongs to the TMEM141 family.

The protein localises to the membrane. The chain is Transmembrane protein 141 (TMEM141) from Homo sapiens (Human).